The primary structure comprises 249 residues: Vitamin B12 import ATP-binding protein BtuD (249 aa).

Residues 5–233 form the ABC transporter domain; sequence MQLQDVAETT…PNLAQAYGMN (229 aa). Residue 33–40 coordinates ATP; it reads GPNGAGKS.

This sequence belongs to the ABC transporter superfamily. Vitamin B12 importer (TC 3.A.1.13.1) family. As to quaternary structure, the complex is composed of two ATP-binding proteins (BtuD), two transmembrane proteins (BtuC) and a solute-binding protein (BtuF).

The protein resides in the cell inner membrane. It carries out the reaction an R-cob(III)alamin(out) + ATP + H2O = an R-cob(III)alamin(in) + ADP + phosphate + H(+). Its function is as follows. Part of the ABC transporter complex BtuCDF involved in vitamin B12 import. Responsible for energy coupling to the transport system. The sequence is that of Vitamin B12 import ATP-binding protein BtuD from Citrobacter koseri (strain ATCC BAA-895 / CDC 4225-83 / SGSC4696).